A 418-amino-acid polypeptide reads, in one-letter code: Glutamyl-tRNA reductase (418 aa).

Residues 49 to 52 (TCNR), S109, 114 to 116 (EPQ), and Q120 each bind substrate. The active-site Nucleophile is the C50. 189-194 (GAGETI) is an NADP(+) binding site.

This sequence belongs to the glutamyl-tRNA reductase family. Homodimer.

It catalyses the reaction (S)-4-amino-5-oxopentanoate + tRNA(Glu) + NADP(+) = L-glutamyl-tRNA(Glu) + NADPH + H(+). Its pathway is porphyrin-containing compound metabolism; protoporphyrin-IX biosynthesis; 5-aminolevulinate from L-glutamyl-tRNA(Glu): step 1/2. Functionally, catalyzes the NADPH-dependent reduction of glutamyl-tRNA(Glu) to glutamate 1-semialdehyde (GSA). This is Glutamyl-tRNA reductase from Escherichia coli O1:K1 / APEC.